A 399-amino-acid chain; its full sequence is Vitamin K-dependent protein Z (399 aa).

Positions Met1–Leu22 are cleaved as a signal peptide. Positions Ser23–Arg40 are excised as a propeptide. The region spanning Gly41–Gly86 is the Gla domain. Glu47, Glu48, Glu55, Glu57, Glu60, Glu61, Glu66, Glu67, Glu70, Glu73, and Glu80 each carry 4-carboxyglutamate. Cys58 and Cys63 form a disulfide bridge. EGF-like domains lie at Gly87–Ala123 and Ala125–Gly166. 7 disulfides stabilise this stretch: Cys91-Cys102, Cys96-Cys111, Cys113-Cys122, Cys129-Cys141, Cys137-Cys150, Cys152-Cys165, and Cys208-Cys224. The N-linked (GlcNAc...) asparagine glycan is linked to Asn99. Asp104 bears the (3R)-3-hydroxyaspartate mark. Residues Ala172–Lys399 form the Peptidase S1 domain. N-linked (GlcNAc...) asparagine glycosylation is found at Asn230, Asn305, and Asn331. Cys326 and Cys340 are oxidised to a cystine.

Belongs to the peptidase S1 family. The iron and 2-oxoglutarate dependent 3-hydroxylation of aspartate and asparagine is (R) stereospecific within EGF domains. In terms of tissue distribution, plasma.

Its subcellular location is the secreted. Functionally, appears to assist hemostasis by binding thrombin and promoting its association with phospholipid vesicles. Inhibits activity of the coagulation protease factor Xa in the presence of SERPINA10, calcium and phospholipids. The protein is Vitamin K-dependent protein Z (Proz) of Mus musculus (Mouse).